A 176-amino-acid chain; its full sequence is NAD(P)H-quinone oxidoreductase subunit 6, chloroplastic (176 aa).

A run of 5 helical transmembrane segments spans residues 10–30 (FLLVFLGSGIILGGLGVVLLT), 32–52 (PIYSAFSLGFVFICISLFYIL), 61–81 (AQLLIYVGAINVLILFAVMFM), 92–112 (LWTLGDGLTSLICTILFLSLI), and 152–172 (FFLPFELMSIILLVALLGAIA).

Belongs to the complex I subunit 6 family. In terms of assembly, NDH is composed of at least 16 different subunits, 5 of which are encoded in the nucleus.

Its subcellular location is the plastid. The protein resides in the chloroplast thylakoid membrane. The catalysed reaction is a plastoquinone + NADH + (n+1) H(+)(in) = a plastoquinol + NAD(+) + n H(+)(out). The enzyme catalyses a plastoquinone + NADPH + (n+1) H(+)(in) = a plastoquinol + NADP(+) + n H(+)(out). NDH shuttles electrons from NAD(P)H:plastoquinone, via FMN and iron-sulfur (Fe-S) centers, to quinones in the photosynthetic chain and possibly in a chloroplast respiratory chain. The immediate electron acceptor for the enzyme in this species is believed to be plastoquinone. Couples the redox reaction to proton translocation, and thus conserves the redox energy in a proton gradient. The protein is NAD(P)H-quinone oxidoreductase subunit 6, chloroplastic (ndhG) of Pelargonium hortorum (Common geranium).